The primary structure comprises 196 residues: Peptidyl-tRNA hydrolase (196 aa).

Tyr14 lines the tRNA pocket. Residue His19 is the Proton acceptor of the active site. TRNA contacts are provided by Tyr64, Asn66, and Asn112.

It belongs to the PTH family. In terms of assembly, monomer.

The protein resides in the cytoplasm. The enzyme catalyses an N-acyl-L-alpha-aminoacyl-tRNA + H2O = an N-acyl-L-amino acid + a tRNA + H(+). Its function is as follows. Hydrolyzes ribosome-free peptidyl-tRNAs (with 1 or more amino acids incorporated), which drop off the ribosome during protein synthesis, or as a result of ribosome stalling. Functionally, catalyzes the release of premature peptidyl moieties from peptidyl-tRNA molecules trapped in stalled 50S ribosomal subunits, and thus maintains levels of free tRNAs and 50S ribosomes. This chain is Peptidyl-tRNA hydrolase, found in Methylocella silvestris (strain DSM 15510 / CIP 108128 / LMG 27833 / NCIMB 13906 / BL2).